Reading from the N-terminus, the 658-residue chain is Putative arrestin-related trafficking adapter C2D10.04 (658 aa).

Disordered regions lie at residues 21–107 (LHHQ…LTWS) and 638–658 (REEA…EIPR). The segment covering 39-81 (NRSSNSGLNRRNSVFGLPSSGLSSRLSKPSLSSINNSNNSSSN) has biased composition (low complexity). Over residues 96–107 (RNMSNKPPLTWS) the composition is skewed to polar residues. S653 is modified (phosphoserine).

The protein belongs to the ALY1 family.

It localises to the cytoplasm. May regulate endocytosis in response to extracellular stimuli. The polypeptide is Putative arrestin-related trafficking adapter C2D10.04 (Schizosaccharomyces pombe (strain 972 / ATCC 24843) (Fission yeast)).